Here is a 494-residue protein sequence, read N- to C-terminus: Anaerobic nitric oxide reductase flavorubredoxin (494 aa).

The segment at 30–210 is zinc metallo-hydrolase; the sequence is TKGTSYNSYL…PFSALVTAKI (181 aa). 6 residues coordinate Fe cation: H79, E81, D83, H147, D166, and H227. Positions 254–393 constitute a Flavodoxin-like domain; it reads ITIFYDSMSN…ECREHGQQIA (140 aa). Residues 260-264 and 342-369 each bind FMN; these read SMSNN and AFGS…ETAI. The 52-residue stretch at 441 to 492 folds into the Rubredoxin-like domain; it reads CQCMVCTVCNWVYDPAKGEPNQGIEVGTTWADVPDYFLCPECHLGKDVFVEY. C446, C449, C479, and C482 together coordinate Fe cation.

The protein in the N-terminal section; belongs to the zinc metallo-hydrolase group 3 family. In terms of assembly, homotetramer. Fe cation serves as cofactor. The cofactor is FMN.

Its subcellular location is the cytoplasm. It participates in nitrogen metabolism; nitric oxide reduction. Its function is as follows. Anaerobic nitric oxide reductase; uses NADH to detoxify nitric oxide (NO), protecting several 4Fe-4S NO-sensitive enzymes. Has at least 2 reductase partners, only one of which (NorW, flavorubredoxin reductase) has been identified. NO probably binds to the di-iron center; electrons enter from the NorW at rubredoxin and are transferred sequentially to the FMN center and the di-iron center. Also able to function as an aerobic oxygen reductase. The polypeptide is Anaerobic nitric oxide reductase flavorubredoxin (Vibrio vulnificus (strain YJ016)).